A 397-amino-acid chain; its full sequence is S-adenosylmethionine synthase (397 aa).

His-16 serves as a coordination point for ATP. Asp-18 lines the Mg(2+) pocket. Glu-44 contacts K(+). Glu-57 and Gln-100 together coordinate L-methionine. Positions 100-110 (QSPDIAQGVNE) are flexible loop. ATP is bound by residues 175-177 (DAK), 242-243 (RF), Asp-251, 257-258 (RK), Ala-274, and Lys-278. Residue Asp-251 participates in L-methionine binding. Lys-282 contributes to the L-methionine binding site.

This sequence belongs to the AdoMet synthase family. Homotetramer; dimer of dimers. Mg(2+) serves as cofactor. The cofactor is K(+).

It localises to the cytoplasm. It carries out the reaction L-methionine + ATP + H2O = S-adenosyl-L-methionine + phosphate + diphosphate. It functions in the pathway amino-acid biosynthesis; S-adenosyl-L-methionine biosynthesis; S-adenosyl-L-methionine from L-methionine: step 1/1. Its function is as follows. Catalyzes the formation of S-adenosylmethionine (AdoMet) from methionine and ATP. The overall synthetic reaction is composed of two sequential steps, AdoMet formation and the subsequent tripolyphosphate hydrolysis which occurs prior to release of AdoMet from the enzyme. This chain is S-adenosylmethionine synthase, found in Streptococcus thermophilus (strain CNRZ 1066).